The chain runs to 540 residues: Upstream-binding protein 1 (540 aa).

S22 is subject to Phosphoserine. The region spanning 60-296 is the Grh/CP2 DB domain; sequence EHPPFQYVMC…EQKKSSKRTL (237 aa). Disordered regions lie at residues 236–270 and 285–368; these read KPKGADRKQKTDREKMEKRTAHEKEKYQPSYDTTI and EHEQ…QPSA. The segment covering 238–262 has biased composition (basic and acidic residues); sequence KGADRKQKTDREKMEKRTAHEKEKY. A compositionally biased stretch (polar residues) spans 320–368; the sequence is YVNNSPSPAPTFTSPQQSTCSVPDSNSSSPNHQGDGASQTSGEQIQPSA. S390 and S393 each carry phosphoserine.

Belongs to the grh/CP2 family. CP2 subfamily. As to quaternary structure, interacts with TFCP2. Interacts with PIAS1, and is probably part of a complex containing TFCP2, UBP1 and PIAS1. In terms of tissue distribution, expressed in adrenal tissue, JEG-3, NCI-H295A, Hep-G2 and HeLa cell lines.

The protein localises to the nucleus. Functionally, functions as a transcriptional activator in a promoter context-dependent manner. Modulates the placental expression of CYP11A1. Involved in regulation of the alpha-globin gene in erythroid cells. Activation of the alpha-globin promoter in erythroid cells is via synergistic interaction with TFCP2. Involved in regulation of the alpha-globin gene in erythroid cells. Binds strongly to sequences around the HIV-1 initiation site and weakly over the TATA-box. Represses HIV-1 transcription by inhibiting the binding of TFIID to the TATA-box. In Homo sapiens (Human), this protein is Upstream-binding protein 1 (UBP1).